A 246-amino-acid polypeptide reads, in one-letter code: Sulfate transporter CysZ (246 aa).

The next 4 helical transmembrane spans lie at 24-44, 69-89, 148-168, and 214-234; these read LFVLIPLSINLLVFALLIGFA, IVWPLFVLLVLVIVFFTFTMV, LLVLSFVPGVNLVATPLWILF, and LLIPLVNLVMMPAAVAGATLF.

This sequence belongs to the CysZ family.

It is found in the cell inner membrane. Its function is as follows. High affinity, high specificity proton-dependent sulfate transporter, which mediates sulfate uptake. Provides the sulfur source for the cysteine synthesis pathway. This is Sulfate transporter CysZ from Pseudomonas paraeruginosa (strain DSM 24068 / PA7) (Pseudomonas aeruginosa (strain PA7)).